Here is a 172-residue protein sequence, read N- to C-terminus: RNA pyrophosphohydrolase (172 aa).

One can recognise a Nudix hydrolase domain in the interval 6 to 149 (GYRPNVGIIL…KRDVYRMALK (144 aa)). Residues 38 to 59 (GGIKYGESPEQAMYRELMEEVG) carry the Nudix box motif.

It belongs to the Nudix hydrolase family. RppH subfamily. The cofactor is a divalent metal cation.

Accelerates the degradation of transcripts by removing pyrophosphate from the 5'-end of triphosphorylated RNA, leading to a more labile monophosphorylated state that can stimulate subsequent ribonuclease cleavage. The sequence is that of RNA pyrophosphohydrolase from Methylobacillus flagellatus (strain ATCC 51484 / DSM 6875 / VKM B-1610 / KT).